We begin with the raw amino-acid sequence, 428 residues long: C4-dicarboxylate transport protein (428 aa).

Helical transmembrane passes span 4–24 (SLFKSLYFQVLTAIAIGILLG), 44–64 (LIKMIIAPVIFCTVVTGIAGM), 76–96 (VALLYFEIVSTIALIIGLIIV), 142–162 (IGAFASGNILQVLLFAVLFGF), 184–204 (VIFGIINMIMRLAPIGAFGAM), 222–242 (LIICFYITCILFVVVVLGTIA), 289–309 (VVGLVIPTGYSFNLDGTSIYL), 326–346 (IFHQITLLVVLLLSSKGAAGV), and 352–372 (IVLAATISAVGHLPVAGLALI).

Belongs to the dicarboxylate/amino acid:cation symporter (DAACS) (TC 2.A.23) family.

It is found in the cell inner membrane. Responsible for the transport of dicarboxylates such as succinate, fumarate, and malate from the periplasm across the membrane. In Salmonella arizonae (strain ATCC BAA-731 / CDC346-86 / RSK2980), this protein is C4-dicarboxylate transport protein.